A 365-amino-acid chain; its full sequence is PDZ and LIM domain protein 3 (365 aa).

In terms of domain architecture, PDZ spans 1 to 84; it reads MPQNVILPGP…QLCLKIDRAE (84 aa). Position 18 is a phosphoserine (S18). The interval 126 to 156 is disordered; sequence FIIPGRSSGCSTPSGIDGGSGRSTPSSVSTL. The span at 147–156 shows a compositional bias: polar residues; the sequence is RSTPSSVSTL. In terms of domain architecture, LIM zinc-binding spans 293-352; it reads PLCDKCGSGIVGAVVKARDKYRHPECFVCADCNLNLKQKGYFFVEGELYCETHARARMRP.

As to quaternary structure, interacts with ACTN2. Forms a heterodimer with PDLIM4 (via LIM domain).

The protein localises to the cytoplasm. It localises to the myofibril. The protein resides in the sarcomere. It is found in the z line. May play a role in the organization of actin filament arrays within muscle cells. This is PDZ and LIM domain protein 3 (PDLIM3) from Sus scrofa (Pig).